The primary structure comprises 298 residues: Protease HtpX homolog (298 aa).

2 helical membrane passes run 15 to 35 (YVMI…GYVF) and 39 to 59 (AMAG…MMIA). H143 is a binding site for Zn(2+). Residue E144 is part of the active site. H147 provides a ligand contact to Zn(2+). 2 consecutive transmembrane segments (helical) span residues 158-178 (IALA…RSFW) and 197-217 (IVMM…TTIA). Position 226 (E226) interacts with Zn(2+).

The protein belongs to the peptidase M48B family. Requires Zn(2+) as cofactor.

The protein localises to the cell membrane. The sequence is that of Protease HtpX homolog from Pediococcus pentosaceus (strain ATCC 25745 / CCUG 21536 / LMG 10740 / 183-1w).